The chain runs to 208 residues: Guanylate kinase (208 aa).

Residues 3-181 (GSLFIITAAS…ALTELKAIIV (179 aa)) form the Guanylate kinase-like domain. 10–17 (AASGTGKT) serves as a coordination point for ATP.

Belongs to the guanylate kinase family.

The protein localises to the cytoplasm. It carries out the reaction GMP + ATP = GDP + ADP. In terms of biological role, essential for recycling GMP and indirectly, cGMP. This Psychrobacter arcticus (strain DSM 17307 / VKM B-2377 / 273-4) protein is Guanylate kinase.